The primary structure comprises 341 residues: Phosphate acyltransferase (341 aa).

Belongs to the PlsX family. Homodimer. Probably interacts with PlsY.

It localises to the cytoplasm. It catalyses the reaction a fatty acyl-[ACP] + phosphate = an acyl phosphate + holo-[ACP]. It functions in the pathway lipid metabolism; phospholipid metabolism. Catalyzes the reversible formation of acyl-phosphate (acyl-PO(4)) from acyl-[acyl-carrier-protein] (acyl-ACP). This enzyme utilizes acyl-ACP as fatty acyl donor, but not acyl-CoA. The protein is Phosphate acyltransferase of Pseudoalteromonas atlantica (strain T6c / ATCC BAA-1087).